A 252-amino-acid chain; its full sequence is Putative zinc finger CCCH domain-containing protein 58 (252 aa).

The C3H1-type zinc finger occupies 35 to 62; sequence NHKSVLCMKWREGRCHNGVACRYAHGEE. 3 disordered regions span residues 71-95, 109-180, and 215-252; these read RVGG…SGST, RHGR…SAAD, and TATS…APPK. Composition is skewed to low complexity over residues 133–149 and 229–238; these read SARS…TTPP and ITTTTSSSTT.

In Oryza sativa subsp. japonica (Rice), this protein is Putative zinc finger CCCH domain-containing protein 58.